A 517-amino-acid polypeptide reads, in one-letter code: Ribose import ATP-binding protein RbsA 1 (517 aa).

2 ABC transporter domains span residues 11–251 (LEMR…VGRD) and 263–507 (YDPG…ALAT). An ATP-binding site is contributed by 43-50 (GENGAGKS).

Belongs to the ABC transporter superfamily. Ribose importer (TC 3.A.1.2.1) family. As to quaternary structure, the complex is composed of an ATP-binding protein (RbsA), two transmembrane proteins (RbsC) and a solute-binding protein (RbsB).

It is found in the cell inner membrane. The catalysed reaction is D-ribose(out) + ATP + H2O = D-ribose(in) + ADP + phosphate + H(+). Its function is as follows. Part of the ABC transporter complex RbsABC involved in ribose import. Responsible for energy coupling to the transport system. In Burkholderia ambifaria (strain ATCC BAA-244 / DSM 16087 / CCUG 44356 / LMG 19182 / AMMD) (Burkholderia cepacia (strain AMMD)), this protein is Ribose import ATP-binding protein RbsA 1.